A 787-amino-acid polypeptide reads, in one-letter code: Endonuclease MutS2 (787 aa).

An ATP-binding site is contributed by 329–336 (GPNTGGKT). Positions 712 to 787 (INLLGCTVDE…DAGVTIVDFK (76 aa)) constitute a Smr domain.

The protein belongs to the DNA mismatch repair MutS family. MutS2 subfamily. In terms of assembly, homodimer. Binds to stalled ribosomes, contacting rRNA.

Endonuclease that is involved in the suppression of homologous recombination and thus may have a key role in the control of bacterial genetic diversity. Its function is as follows. Acts as a ribosome collision sensor, splitting the ribosome into its 2 subunits. Detects stalled/collided 70S ribosomes which it binds and splits by an ATP-hydrolysis driven conformational change. Acts upstream of the ribosome quality control system (RQC), a ribosome-associated complex that mediates the extraction of incompletely synthesized nascent chains from stalled ribosomes and their subsequent degradation. Probably generates substrates for RQC. This chain is Endonuclease MutS2, found in Lachnospira eligens (strain ATCC 27750 / DSM 3376 / VPI C15-48 / C15-B4) (Eubacterium eligens).